A 791-amino-acid polypeptide reads, in one-letter code: Major facilitator superfamily domain-containing protein 6 (791 aa).

An N-acetylalanine modification is found at A2. T10 is modified (phosphothreonine). Residues 22–47 (LADPFNGISREPEPPSNETPSSTETS) are disordered. The span at 37–47 (SNETPSSTETS) shows a compositional bias: low complexity. The next 6 helical transmembrane spans lie at 73–93 (VFYFFFYSAYGSLYPLLPVYY), 105–125 (LLVGIRYFIEFCSAPFWGVVA), 132–152 (KIVLLFSLLCWVLFNLGIGFV), 286–306 (AIFLVILVVVIIGEFFSASSV), 335–355 (WGLAMLSVGIGIDYTHIEVLI), and 369–389 (QIVFIVFGVLMTMALIVATQF). The interval 407–427 (EIPQVERNNSTESSEETPTTT) is disordered. The span at 416-427 (STESSEETPTTT) shows a compositional bias: low complexity. A run of 6 helical transmembrane segments spans residues 450-470 (VLFVAWFMGFGYGFVFTFLYW), 479-499 (TTLFGVCSVLSHVSELTAYFF), 507-527 (IGHIRVLYIGLACNTARYIYI), 544-564 (GVTHAAIWAACISYLSAAVPP), 579-599 (LGLGRGCGAMIGGVLVNYFGA), and 605-625 (GIGMACLVILLLFALIQWLAV). 2 disordered regions span residues 662–687 (MPRIEPRLPPKKTKHQEEQEDVNKPA) and 723–791 (LQGT…AGGH). Residues 750–768 (SRNQPSPDAAASQTQTSPA) are compositionally biased toward polar residues. Over residues 782–791 (QQAQLAAGGH) the composition is skewed to low complexity.

It belongs to the major facilitator superfamily. MFSD6 family. May interact with HLA-B62. In terms of tissue distribution, widely expressed. Expression levels in peripheral blood mononuclear cells are highly variable between individuals, including no expression at all.

It localises to the membrane. This chain is Major facilitator superfamily domain-containing protein 6 (MFSD6), found in Homo sapiens (Human).